A 669-amino-acid polypeptide reads, in one-letter code: DNA mismatch repair protein MutL (669 aa).

2 disordered regions span residues 354 to 402 (NRPA…ENPY) and 448 to 479 (TVSHDSPPNRTAPDATTSSSKPRAPIESPLES). The span at 448–468 (TVSHDSPPNRTAPDATTSSSK) shows a compositional bias: polar residues.

Belongs to the DNA mismatch repair MutL/HexB family.

Its function is as follows. This protein is involved in the repair of mismatches in DNA. It is required for dam-dependent methyl-directed DNA mismatch repair. May act as a 'molecular matchmaker', a protein that promotes the formation of a stable complex between two or more DNA-binding proteins in an ATP-dependent manner without itself being part of a final effector complex. In Pectobacterium carotovorum subsp. carotovorum (strain PC1), this protein is DNA mismatch repair protein MutL.